A 293-amino-acid chain; its full sequence is MVTTVEMLTTWNPVTVSLVSPVIIYWVASAFFGFLHYIELPVFEKYRIHPPEEIARRNRVPQMAVVKAVLFQQLCEVVVGIALAMFEGYPEPIDEAKQMLRYEAFFSKNLPALLQVAPFAPKLAYNFIVPAFQYFFAFFIIDSWQYFWHRYLHYNKKLYNMIHAHHHRLQVPYAMGALYNHPFEGLILDTFGAGVAYLAAGLSPQQAVIFFTLSTLKTVDDHCGYVFPYDPLQMFFANNARYHDLHHQPYGFQKNFSQPFFTFWDHVLGTYMPPKSETPYEKKQKAKNAKKVN.

3 helical membrane-spanning segments follow: residues leucine 18–isoleucine 38, alanine 68–glycine 88, and phenylalanine 127–phenylalanine 147. The 135-residue stretch at phenylalanine 136–threonine 270 folds into the Fatty acid hydroxylase domain.

It belongs to the sterol desaturase family.

The protein resides in the endoplasmic reticulum membrane. It functions in the pathway membrane lipid metabolism; sphingolipid biosynthesis. Functionally, required for hydroxylation of C-4 in the sphingoid moiety of ceramide. Involved in the response to syringomycin. The protein is Sphingolipid C4-hydroxylase sur2 (sur2) of Schizosaccharomyces pombe (strain 972 / ATCC 24843) (Fission yeast).